A 237-amino-acid chain; its full sequence is Probable transcriptional regulatory protein NIS_0560 (237 aa).

The protein belongs to the TACO1 family.

The protein localises to the cytoplasm. The sequence is that of Probable transcriptional regulatory protein NIS_0560 from Nitratiruptor sp. (strain SB155-2).